The sequence spans 163 residues: Biotin carboxyl carrier protein of acetyl-CoA carboxylase (163 aa).

In terms of domain architecture, Biotinyl-binding spans 85 to 161 (GDFIVSPLVG…QFGSKLFRIV (77 aa)). Lys127 is subject to N6-biotinyllysine.

As to quaternary structure, homodimer.

It participates in lipid metabolism; fatty acid biosynthesis. In terms of biological role, this protein is a component of the acetyl coenzyme A carboxylase complex; first, biotin carboxylase catalyzes the carboxylation of the carrier protein and then the transcarboxylase transfers the carboxyl group to form malonyl-CoA. The protein is Biotin carboxyl carrier protein of acetyl-CoA carboxylase (accB) of Chlamydia muridarum (strain MoPn / Nigg).